The primary structure comprises 211 residues: DELTA-stichotoxin-Hmg2a (211 aa).

An N-terminal signal peptide occupies residues 1 to 19 (MNRLIVLFLIVTMICATIA). Residues 20–34 (VPSREELEDQKEYKR) constitute a propeptide that is removed on maturation. The segment at 37-46 (ALAGTIIEGA) is plays an important role in the hemolytic activity. The tract at residues 45-64 (GASLGFQILDKVLGELGKVS) is N-terminal region. Phosphocholine is bound by residues serine 88, valine 121, serine 139, proline 141, tyrosine 167, tyrosine 171, and tyrosine 172. The tract at residues 139–154 (SVPFDYNFYSNWWDVK) is trp-rich region, which is important for the binding to lipid membrane. A Cell attachment site, crucial for protein stability motif is present at residues 177–179 (RGD).

This sequence belongs to the actinoporin family. Sea anemone subfamily. In terms of assembly, octamer or nonamer in membranes. Monomer in the soluble state.

Its subcellular location is the secreted. It is found in the nematocyst. The protein localises to the target cell membrane. In terms of biological role, pore-forming protein that forms cations-selective hydrophilic pores of around 1 nm and causes cardiac stimulation and cytolysis. Pore formation is a multi-step process that involves specific recognition of membrane sphingomyelin (but neither cholesterol nor phosphatidylcholine) using aromatic rich region and adjacent phosphocholine (POC) binding site, firm binding to the membrane (mainly driven by hydrophobic interactions) accompanied by the transfer of the N-terminal region to the lipid-water interface and finally pore formation after oligomerization of monomers. This is DELTA-stichotoxin-Hmg2a from Heteractis magnifica (Magnificent sea anemone).